Here is a 194-residue protein sequence, read N- to C-terminus: dTTP/UTP pyrophosphatase (194 aa).

The active-site Proton acceptor is the Asp-69.

It belongs to the Maf family. YhdE subfamily. A divalent metal cation serves as cofactor.

It localises to the cytoplasm. The enzyme catalyses dTTP + H2O = dTMP + diphosphate + H(+). It carries out the reaction UTP + H2O = UMP + diphosphate + H(+). In terms of biological role, nucleoside triphosphate pyrophosphatase that hydrolyzes dTTP and UTP. May have a dual role in cell division arrest and in preventing the incorporation of modified nucleotides into cellular nucleic acids. The chain is dTTP/UTP pyrophosphatase from Symbiobacterium thermophilum (strain DSM 24528 / JCM 14929 / IAM 14863 / T).